The sequence spans 419 residues: 3-isopropylmalate dehydratase large subunit (419 aa).

Residues Cys300, Cys360, and Cys363 each contribute to the [4Fe-4S] cluster site.

It belongs to the aconitase/IPM isomerase family. LeuC type 2 subfamily. As to quaternary structure, heterodimer of LeuC and LeuD. The cofactor is [4Fe-4S] cluster.

The enzyme catalyses (2R,3S)-3-isopropylmalate = (2S)-2-isopropylmalate. Its pathway is amino-acid biosynthesis; L-leucine biosynthesis; L-leucine from 3-methyl-2-oxobutanoate: step 2/4. Functionally, catalyzes the isomerization between 2-isopropylmalate and 3-isopropylmalate, via the formation of 2-isopropylmaleate. This Nitratidesulfovibrio vulgaris (strain DP4) (Desulfovibrio vulgaris) protein is 3-isopropylmalate dehydratase large subunit.